The following is a 111-amino-acid chain: MKDPYDVVKRHYVTEKAKMLEGLSLGGGEGKKKGSFCKDPKYTFVVAGDATKPMIAEAIEAIYSNKGVKVKKVNTVCVKPQPTRIFRGKRKGRTAGFKKAIVTFVDGHSIG.

Belongs to the universal ribosomal protein uL23 family. As to quaternary structure, part of the 50S ribosomal subunit. Contacts protein L29, and trigger factor when it is bound to the ribosome.

Its function is as follows. One of the early assembly proteins it binds 23S rRNA. One of the proteins that surrounds the polypeptide exit tunnel on the outside of the ribosome. Forms the main docking site for trigger factor binding to the ribosome. The polypeptide is Large ribosomal subunit protein uL23 (Chlamydia muridarum (strain MoPn / Nigg)).